A 423-amino-acid polypeptide reads, in one-letter code: Glucoside xylosyltransferase 2 (423 aa).

Residues 1–6 are Cytoplasmic-facing; the sequence is MRFRWK. Residues 7–26 form a helical; Signal-anchor for type II membrane protein membrane-spanning segment; sequence FFGSLLCVTGLLLVLYRQLG. Residues 27–423 are Lumenal-facing; that stretch reads NVPQPPPGPA…RVVVHIRSDV (397 aa). The interval 60–85 is disordered; it reads RRDARQGGKKKTNWNNVRAPEQKPNP. 2 N-linked (GlcNAc...) asparagine glycosylation sites follow: Asn-215 and Asn-256.

It belongs to the glycosyltransferase 8 family.

It is found in the membrane. It carries out the reaction 3-O-(beta-D-glucosyl)-L-seryl-[EGF-like domain protein] + UDP-alpha-D-xylose = 3-O-[alpha-D-xylosyl-(1-&gt;3)-beta-D-glucosyl]-L-seryl-[EGF-like domain protein] + UDP + H(+). Glycosyltransferase which elongates the O-linked glucose attached to EGF-like repeats in the extracellular domain of Notch proteins by catalyzing the addition of xylose. This is Glucoside xylosyltransferase 2 (gxylt2) from Xenopus laevis (African clawed frog).